A 431-amino-acid chain; its full sequence is Adenylosuccinate synthetase (431 aa).

GTP-binding positions include 13–19 (GDEGKGK) and 41–43 (GHT). The active-site Proton acceptor is D14. Residues D14 and G41 each contribute to the Mg(2+) site. IMP is bound by residues 14–17 (DEGK), 39–42 (NAGH), T130, R144, Q225, T240, and R304. The active-site Proton donor is the H42. A substrate-binding site is contributed by 300-306 (ATTGRQR). GTP is bound by residues R306, 332–334 (KLD), and 414–416 (STG).

The protein belongs to the adenylosuccinate synthetase family. Homodimer. The cofactor is Mg(2+).

It localises to the cytoplasm. It carries out the reaction IMP + L-aspartate + GTP = N(6)-(1,2-dicarboxyethyl)-AMP + GDP + phosphate + 2 H(+). It participates in purine metabolism; AMP biosynthesis via de novo pathway; AMP from IMP: step 1/2. Functionally, plays an important role in the de novo pathway of purine nucleotide biosynthesis. Catalyzes the first committed step in the biosynthesis of AMP from IMP. This is Adenylosuccinate synthetase from Saccharophagus degradans (strain 2-40 / ATCC 43961 / DSM 17024).